Consider the following 173-residue polypeptide: Disulfide bond formation protein B (173 aa).

Over 1–14 the chain is Cytoplasmic; the sequence is MIEFLRRIAAHRLA. A helical transmembrane segment spans residues 15–31; the sequence is WGLLAASALFLELSALF. Over 32 to 49 the chain is Periplasmic; the sequence is FQYVLGLHPCVMCVYERL. The cysteines at positions 41 and 44 are disulfide-linked. Residues 50 to 65 form a helical membrane-spanning segment; that stretch reads AILGVLSAGLLGMVAP. Residues 66–72 lie on the Cytoplasmic side of the membrane; the sequence is EKWYLRW. Residues 73–90 form a helical membrane-spanning segment; sequence SALLLWGYSAFRGLQLAL. The Periplasmic portion of the chain corresponds to 91–145; sequence KHVDYQMNPSPFNVCSPFADFPSWAPLDQWLPWLFFPDGDCSEISWQFLSFSMPQ. Cys-105 and Cys-131 form a disulfide bridge. The helical transmembrane segment at 146-164 threads the bilayer; sequence WLVAIFAAYLLVFVVVTIG. Topologically, residues 165-173 are cytoplasmic; the sequence is NLVKGRCCS.

It belongs to the DsbB family.

It localises to the cell inner membrane. Required for disulfide bond formation in some periplasmic proteins. Acts by oxidizing the DsbA protein. In Aeromonas salmonicida (strain A449), this protein is Disulfide bond formation protein B.